Consider the following 421-residue polypeptide: ATP-dependent RNA helicase RhlB (421 aa).

The Q motif motif lies at 9-37; the sequence is QKFSDFALHPVVVQALEKKGFYNCTPIQA. The Helicase ATP-binding domain maps to 40–219; sequence LPLTLAGRDV…FEQMNNAEYV (180 aa). 53–60 serves as a coordination point for ATP; it reads AQTGTGKT. The short motif at 165 to 168 is the DEAD box element; that stretch reads DEAD. The Helicase C-terminal domain maps to 245-390; that stretch reads RLLQTLIEEE…VSKYNPDALL (146 aa). The segment at 390-421 is disordered; sequence LSELPPPKRLSRPRTGNGPRRSGAPRNRRRTG. The span at 405 to 414 shows a compositional bias: low complexity; that stretch reads GNGPRRSGAP.

This sequence belongs to the DEAD box helicase family. RhlB subfamily. Component of the RNA degradosome, which is a multiprotein complex involved in RNA processing and mRNA degradation.

It is found in the cytoplasm. It carries out the reaction ATP + H2O = ADP + phosphate + H(+). DEAD-box RNA helicase involved in RNA degradation. Has RNA-dependent ATPase activity and unwinds double-stranded RNA. This chain is ATP-dependent RNA helicase RhlB, found in Cronobacter sakazakii (strain ATCC BAA-894) (Enterobacter sakazakii).